We begin with the raw amino-acid sequence, 492 residues long: UDP-N-acetylmuramyl-tripeptide synthetase 2 (492 aa).

S30 is a binding site for UDP-N-acetyl-alpha-D-muramoyl-L-alanyl-D-glutamate. Residue 111-117 (GTNGKTT) participates in ATP binding. Residues 154-155 (TT), S181, Q187, and R189 contribute to the UDP-N-acetyl-alpha-D-muramoyl-L-alanyl-D-glutamate site. At K221 the chain carries N6-carboxylysine.

The protein belongs to the MurCDEF family. MurE subfamily. Carboxylation is probably crucial for Mg(2+) binding and, consequently, for the gamma-phosphate positioning of ATP.

It localises to the cytoplasm. The protein operates within cell wall biogenesis; peptidoglycan biosynthesis. Catalyzes the addition of an amino acid to the nucleotide precursor UDP-N-acetylmuramoyl-L-alanyl-D-glutamate (UMAG) in the biosynthesis of bacterial cell-wall peptidoglycan. The polypeptide is UDP-N-acetylmuramyl-tripeptide synthetase 2 (Oceanobacillus iheyensis (strain DSM 14371 / CIP 107618 / JCM 11309 / KCTC 3954 / HTE831)).